The primary structure comprises 122 residues: Large ribosomal subunit protein uL14 (122 aa).

This sequence belongs to the universal ribosomal protein uL14 family. As to quaternary structure, part of the 50S ribosomal subunit. Forms a cluster with proteins L3 and L19. In the 70S ribosome, L14 and L19 interact and together make contacts with the 16S rRNA in bridges B5 and B8.

Its function is as follows. Binds to 23S rRNA. Forms part of two intersubunit bridges in the 70S ribosome. This chain is Large ribosomal subunit protein uL14, found in Mycoplasma genitalium (strain ATCC 33530 / DSM 19775 / NCTC 10195 / G37) (Mycoplasmoides genitalium).